The sequence spans 761 residues: Zinc finger protein 287 (761 aa).

An SCAN box domain is found at 49–131; sequence RQNFRNFPYP…TLVEDLTQIL (83 aa). Residues 134-154 form a disordered region; it reads EAPQNSTLSQDTPEEDPRGKH. The region spanning 170–238 is the KRAB domain; that stretch reads MTFKDVAVDI…IKEILEGPSP (69 aa). 14 C2H2-type zinc fingers span residues 368 to 390, 396 to 418, 424 to 446, 452 to 474, 480 to 502, 508 to 530, 536 to 558, 564 to 586, 592 to 614, 620 to 642, 648 to 670, 676 to 698, 704 to 726, and 732 to 754; these read YKCNVCGKKFRKYPSLLKHQSTH, YECEECGKEFRHISSLIAHQRMH, YECHQCGKAFSQRAHLTIHQRIH, YKCDDCGKDFSQRAHLTIHQRTH, YKCLECGKTFSHSSSLINHQRVH, YICNECGKTFSQSTHLLQHQKIH, YKCNECWKVFSQSTYLIRHQRIH, YKCNECGKAFAHSSTLIQHQTTH, YICNICGKAFSQSANLTQHHRTH, YKCSVCGKAFSQSVHLTQHQRIH, FKCNICGKAYRQGANLTQHQRIH, YKCNECGKAFIYSSSLNQHQRTH, YKCNECDKDFSQRTCLIQHQRIH, and YACRICGKTFTQSTNLIQHQRVH.

The protein belongs to the krueppel C2H2-type zinc-finger protein family.

It is found in the nucleus. May be involved in transcriptional regulation. The sequence is that of Zinc finger protein 287 from Pongo pygmaeus (Bornean orangutan).